Here is an 85-residue protein sequence, read N- to C-terminus: Small ribosomal subunit protein uS17 (85 aa).

The protein belongs to the universal ribosomal protein uS17 family. In terms of assembly, part of the 30S ribosomal subunit.

One of the primary rRNA binding proteins, it binds specifically to the 5'-end of 16S ribosomal RNA. This Lachnospira eligens (strain ATCC 27750 / DSM 3376 / VPI C15-48 / C15-B4) (Eubacterium eligens) protein is Small ribosomal subunit protein uS17.